The chain runs to 448 residues: tRNA(Ile)-lysidine synthase (448 aa).

Position 29-34 (29-34) interacts with ATP; that stretch reads SGGVDS.

It belongs to the tRNA(Ile)-lysidine synthase family.

The protein resides in the cytoplasm. It catalyses the reaction cytidine(34) in tRNA(Ile2) + L-lysine + ATP = lysidine(34) in tRNA(Ile2) + AMP + diphosphate + H(+). Functionally, ligates lysine onto the cytidine present at position 34 of the AUA codon-specific tRNA(Ile) that contains the anticodon CAU, in an ATP-dependent manner. Cytidine is converted to lysidine, thus changing the amino acid specificity of the tRNA from methionine to isoleucine. This chain is tRNA(Ile)-lysidine synthase, found in Azoarcus sp. (strain BH72).